Reading from the N-terminus, the 348-residue chain is NADH-quinone oxidoreductase subunit H (348 aa).

8 consecutive transmembrane segments (helical) span residues 21 to 41, 87 to 107, 120 to 140, 166 to 186, 193 to 213, 258 to 278, 283 to 303, and 323 to 343; these read IIGILVIALPLMLAVAMIIYA, GLFLLAPIITFTVALIVWAVI, IGLLYVLAASSIGVYGVIIAG, IGFVLISVVLWTGSFNMSAIV, IFGFINGYGFNPLLFPMAVVF, NVILMCGLNAILFWGGWLPPV, LYMVPGIIWFFAKLLFFFFVF, and WKVFLPLSLFWVFLVSGWLML.

The protein belongs to the complex I subunit 1 family. In terms of assembly, NDH-1 is composed of 14 different subunits. Subunits NuoA, H, J, K, L, M, N constitute the membrane sector of the complex.

The protein resides in the cell inner membrane. The catalysed reaction is a quinone + NADH + 5 H(+)(in) = a quinol + NAD(+) + 4 H(+)(out). In terms of biological role, NDH-1 shuttles electrons from NADH, via FMN and iron-sulfur (Fe-S) centers, to quinones in the respiratory chain. The immediate electron acceptor for the enzyme in this species is believed to be ubiquinone. Couples the redox reaction to proton translocation (for every two electrons transferred, four hydrogen ions are translocated across the cytoplasmic membrane), and thus conserves the redox energy in a proton gradient. This subunit may bind ubiquinone. This Rhizorhabdus wittichii (strain DSM 6014 / CCUG 31198 / JCM 15750 / NBRC 105917 / EY 4224 / RW1) (Sphingomonas wittichii) protein is NADH-quinone oxidoreductase subunit H.